The chain runs to 225 residues: Octanoyltransferase (225 aa).

The BPL/LPL catalytic domain maps to 31–214 (ENTCDEVWLV…ELTTLLDYTD (184 aa)). Substrate-binding positions include 70–77 (RGGQVTYH), 137–139 (SLG), and 150–152 (GLA). Catalysis depends on cysteine 168, which acts as the Acyl-thioester intermediate.

The protein belongs to the LipB family.

The protein localises to the cytoplasm. It catalyses the reaction octanoyl-[ACP] + L-lysyl-[protein] = N(6)-octanoyl-L-lysyl-[protein] + holo-[ACP] + H(+). The protein operates within protein modification; protein lipoylation via endogenous pathway; protein N(6)-(lipoyl)lysine from octanoyl-[acyl-carrier-protein]: step 1/2. Functionally, catalyzes the transfer of endogenously produced octanoic acid from octanoyl-acyl-carrier-protein onto the lipoyl domains of lipoate-dependent enzymes. Lipoyl-ACP can also act as a substrate although octanoyl-ACP is likely to be the physiological substrate. This chain is Octanoyltransferase, found in Aliivibrio fischeri (strain ATCC 700601 / ES114) (Vibrio fischeri).